The primary structure comprises 290 residues: uncharacterized protein (290 aa).

Transmembrane regions (helical) follow at residues 71 to 91 (FWSF…VKNI), 124 to 144 (GILI…LPGM), 155 to 175 (IIIG…YILV), 202 to 222 (FILV…LQLV), 234 to 254 (MFSI…VLTP), and 262 to 282 (ILLS…VLVV).

This sequence belongs to the TatC family.

Its subcellular location is the plastid. The protein localises to the chloroplast membrane. This is an uncharacterized protein from Guillardia theta (Cryptophyte).